Consider the following 284-residue polypeptide: Proteasome subunit beta (284 aa).

Residues 1-56 (MSPMESSSTRFPGQALPAAYLTPGSSSFTDFLRVAAPELMPGSRPVPDGAVEAPHG) constitute a propeptide, removed in mature form; by autocatalysis. Thr57 serves as the catalytic Nucleophile.

Belongs to the peptidase T1B family. In terms of assembly, the 20S proteasome core is composed of 14 alpha and 14 beta subunits that assemble into four stacked heptameric rings, resulting in a barrel-shaped structure. The two inner rings, each composed of seven catalytic beta subunits, are sandwiched by two outer rings, each composed of seven alpha subunits. The catalytic chamber with the active sites is on the inside of the barrel. Has a gated structure, the ends of the cylinder being occluded by the N-termini of the alpha-subunits. Is capped by the proteasome-associated ATPase, ARC.

The protein localises to the cytoplasm. The catalysed reaction is Cleavage of peptide bonds with very broad specificity.. The protein operates within protein degradation; proteasomal Pup-dependent pathway. The formation of the proteasomal ATPase ARC-20S proteasome complex, likely via the docking of the C-termini of ARC into the intersubunit pockets in the alpha-rings, may trigger opening of the gate for substrate entry. Interconversion between the open-gate and close-gate conformations leads to a dynamic regulation of the 20S proteasome proteolysis activity. In terms of biological role, component of the proteasome core, a large protease complex with broad specificity involved in protein degradation. This Saccharopolyspora erythraea (strain ATCC 11635 / DSM 40517 / JCM 4748 / NBRC 13426 / NCIMB 8594 / NRRL 2338) protein is Proteasome subunit beta.